Reading from the N-terminus, the 431-residue chain is Tyrosine--tRNA ligase (431 aa).

Residue Y33 participates in L-tyrosine binding. Residues 38-47 carry the 'HIGH' region motif; that stretch reads PTADSLHIGS. Positions 172 and 176 each coordinate L-tyrosine. Residues 234–238 carry the 'KMSKS' region motif; that stretch reads KFGKS. K237 is an ATP binding site. The 68-residue stretch at 364 to 431 folds into the S4 RNA-binding domain; it reads INIVEVLNEK…KKNYFVLNVK (68 aa).

It belongs to the class-I aminoacyl-tRNA synthetase family. TyrS type 1 subfamily. In terms of assembly, homodimer.

It is found in the cytoplasm. It carries out the reaction tRNA(Tyr) + L-tyrosine + ATP = L-tyrosyl-tRNA(Tyr) + AMP + diphosphate + H(+). Catalyzes the attachment of tyrosine to tRNA(Tyr) in a two-step reaction: tyrosine is first activated by ATP to form Tyr-AMP and then transferred to the acceptor end of tRNA(Tyr). In Flavobacterium psychrophilum (strain ATCC 49511 / DSM 21280 / CIP 103535 / JIP02/86), this protein is Tyrosine--tRNA ligase.